A 374-amino-acid polypeptide reads, in one-letter code: Transcription termination factor 1, mitochondrial (374 aa).

The N-terminal 37 residues, 1–37 (MASRNIWRVRRNFLFDLRGWVPQYSAEVFLKSIPFRP), are a transit peptide targeting the mitochondrion. 5 interaction with DNA regions span residues 146 to 147 (RS), 224 to 228 (QSTKR), 301 to 308 (SEKKFNDK), 332 to 335 (SIHT), and 361 to 368 (SQRRYEAK).

Belongs to the mTERF family. In terms of assembly, monomer. Post-translationally, is a phosphoprotein. While the DNA-binding activity is unaffected by the phosphorylation/dephosphorylation state, only the phosphorylated form of the protein is active for termination activity. Functioning seems to be regulated by phosphorylation.

It is found in the mitochondrion. In terms of biological role, transcription termination factor. Binds to a 28 bp region within the tRNA(Leu(uur)) gene at a position immediately adjacent to and downstream of the 16S rRNA gene; this region comprises a tridecamer sequence critical for directing accurate termination. Binds DNA along the major grove and promotes DNA bending and partial unwinding. Promotes base flipping. Transcription termination activity appears to be polarized with highest specificity for transcripts initiated on the light strand. The sequence is that of Transcription termination factor 1, mitochondrial (Mterf1) from Rattus norvegicus (Rat).